The following is a 197-amino-acid chain: Endo-1,4-beta-xylanase A (197 aa).

A GH11 domain is found at 1 to 197 (SGTPSSTGTD…SSGTATITVT (197 aa)). Glutamate 87 functions as the Nucleophile in the catalytic mechanism. Cysteine 111 and cysteine 160 are joined by a disulfide. Glutamate 184 functions as the Proton donor in the catalytic mechanism.

It belongs to the glycosyl hydrolase 11 (cellulase G) family.

The protein localises to the secreted. The catalysed reaction is Endohydrolysis of (1-&gt;4)-beta-D-xylosidic linkages in xylans.. It functions in the pathway glycan degradation; xylan degradation. Hydrolyzes xylans into xylobiose and xylose. The chain is Endo-1,4-beta-xylanase A (XYNA) from Schizophyllum commune (Split gill fungus).